The primary structure comprises 72 residues: Large ribosomal subunit protein bL28 (72 aa).

It belongs to the bacterial ribosomal protein bL28 family.

The sequence is that of Large ribosomal subunit protein bL28 from Chlorobium chlorochromatii (strain CaD3).